The chain runs to 307 residues: Heparan sulfate glucosamine 3-O-sulfotransferase 1 (307 aa).

The signal sequence occupies residues 1–20 (MAALLLGAVLLVAQPQLVPS). An N-linked (GlcNAc...) asparagine glycan is attached at Asn-48. 3'-phosphoadenylyl sulfate-binding positions include 64 to 68 (KGGTR), Arg-147, and Ser-155. 3 N-linked (GlcNAc...) asparagine glycosylation sites follow: Asn-192, Asn-242, and Asn-249. Tyr-255 is a 3'-phosphoadenylyl sulfate binding site. A disulfide bridge links Cys-256 with Cys-265. 270-274 (KGRAH) lines the 3'-phosphoadenylyl sulfate pocket.

Belongs to the sulfotransferase 1 family. As to expression, highly expressed in the brain and kidney and weakly expressed in the heart, lung and placenta.

Its subcellular location is the golgi apparatus lumen. It catalyses the reaction alpha-D-glucosaminyl-[heparan sulfate](n) + 3'-phosphoadenylyl sulfate = 3-sulfo-alpha-D-glucosaminyl-[heparan sulfate](n) + adenosine 3',5'-bisphosphate + H(+). In terms of biological role, sulfotransferase that utilizes 3'-phospho-5'-adenylyl sulfate (PAPS) to catalyze the transfer of a sulfo group to position 3 of glucosamine residues in heparan. Catalyzes the rate limiting step in the biosynthesis of heparan sulfate (HSact). This modification is a crucial step in the biosynthesis of anticoagulant heparan sulfate as it completes the structure of the antithrombin pentasaccharide binding site. This is Heparan sulfate glucosamine 3-O-sulfotransferase 1 (HS3ST1) from Homo sapiens (Human).